The sequence spans 176 residues: MVSMEEKIKACVLQALESAAGTKGEGVYLVSVRVKGAGKQTKIEILLDSDTGIRIDQCSFFSRRIRELLENEGGTPVLDGEDFDLMVSSPGLGEPLLMPRQYLRHTGRLLRVIWKDEQQSEKTVTGRLQQVLKTEGEITAVRLVPVKTGKKSAGNVQEPIELMLDCIVRAVPEAEL.

Belongs to the RimP family.

It localises to the cytoplasm. In terms of biological role, required for maturation of 30S ribosomal subunits. This chain is Ribosome maturation factor RimP, found in Chlorobium limicola (strain DSM 245 / NBRC 103803 / 6330).